Reading from the N-terminus, the 285-residue chain is 2-dehydro-3-deoxyphosphooctonate aldolase (285 aa).

The protein belongs to the KdsA family.

The protein localises to the cytoplasm. The enzyme catalyses D-arabinose 5-phosphate + phosphoenolpyruvate + H2O = 3-deoxy-alpha-D-manno-2-octulosonate-8-phosphate + phosphate. The protein operates within carbohydrate biosynthesis; 3-deoxy-D-manno-octulosonate biosynthesis; 3-deoxy-D-manno-octulosonate from D-ribulose 5-phosphate: step 2/3. It participates in bacterial outer membrane biogenesis; lipopolysaccharide biosynthesis. This Paracidovorax citrulli (strain AAC00-1) (Acidovorax citrulli) protein is 2-dehydro-3-deoxyphosphooctonate aldolase.